We begin with the raw amino-acid sequence, 211 residues long: Probable nicotinate-nucleotide adenylyltransferase (211 aa).

Belongs to the NadD family.

The enzyme catalyses nicotinate beta-D-ribonucleotide + ATP + H(+) = deamido-NAD(+) + diphosphate. It participates in cofactor biosynthesis; NAD(+) biosynthesis; deamido-NAD(+) from nicotinate D-ribonucleotide: step 1/1. Catalyzes the reversible adenylation of nicotinate mononucleotide (NaMN) to nicotinic acid adenine dinucleotide (NaAD). The sequence is that of Probable nicotinate-nucleotide adenylyltransferase from Shewanella frigidimarina (strain NCIMB 400).